Reading from the N-terminus, the 697-residue chain is Potassium-transporting ATPase ATP-binding subunit (697 aa).

Helical transmembrane passes span 55–75 (PIMFVVEIGFVITFILSFFPS), 79–99 (SIPGWFNITVSLILLFTVLFA), 245–265 (LTLIFLIVVVTLPIFTNYLGF), and 271–291 (VLVALLVCLIPTTIGGLLSAI). The active-site 4-aspartylphosphate intermediate is aspartate 324. ATP contacts are provided by residues aspartate 361, glutamate 365, 393 to 400 (FKAETRMS), and lysine 412. 2 residues coordinate Mg(2+): aspartate 535 and aspartate 539. A run of 3 helical transmembrane segments spans residues 605-625 (FAIIPAMFTLAIPQMEALNIM), 633-653 (AILSALLFNAVIIPLLIPLAM), and 677-697 (GGVIVPFIGIKVIDIIVGLFI).

This sequence belongs to the cation transport ATPase (P-type) (TC 3.A.3) family. Type IA subfamily. The system is composed of three essential subunits: KdpA, KdpB and KdpC.

The protein resides in the cell membrane. It catalyses the reaction K(+)(out) + ATP + H2O = K(+)(in) + ADP + phosphate + H(+). In terms of biological role, part of the high-affinity ATP-driven potassium transport (or Kdp) system, which catalyzes the hydrolysis of ATP coupled with the electrogenic transport of potassium into the cytoplasm. This subunit is responsible for energy coupling to the transport system and for the release of the potassium ions to the cytoplasm. In Bacillus cereus (strain AH820), this protein is Potassium-transporting ATPase ATP-binding subunit.